The sequence spans 103 residues: Large ribosomal subunit protein uL24 (103 aa).

Belongs to the universal ribosomal protein uL24 family. Part of the 50S ribosomal subunit.

One of two assembly initiator proteins, it binds directly to the 5'-end of the 23S rRNA, where it nucleates assembly of the 50S subunit. Functionally, one of the proteins that surrounds the polypeptide exit tunnel on the outside of the subunit. This Latilactobacillus sakei subsp. sakei (strain 23K) (Lactobacillus sakei subsp. sakei) protein is Large ribosomal subunit protein uL24.